The primary structure comprises 231 residues: Enolase-phosphatase E1 (231 aa).

Belongs to the HAD-like hydrolase superfamily. MasA/MtnC family. Monomer. It depends on Mg(2+) as a cofactor.

The catalysed reaction is 5-methylsulfanyl-2,3-dioxopentyl phosphate + H2O = 1,2-dihydroxy-5-(methylsulfanyl)pent-1-en-3-one + phosphate. It functions in the pathway amino-acid biosynthesis; L-methionine biosynthesis via salvage pathway; L-methionine from S-methyl-5-thio-alpha-D-ribose 1-phosphate: step 3/6. The protein operates within amino-acid biosynthesis; L-methionine biosynthesis via salvage pathway; L-methionine from S-methyl-5-thio-alpha-D-ribose 1-phosphate: step 4/6. In terms of biological role, bifunctional enzyme that catalyzes the enolization of 2,3-diketo-5-methylthiopentyl-1-phosphate (DK-MTP-1-P) into the intermediate 2-hydroxy-3-keto-5-methylthiopentenyl-1-phosphate (HK-MTPenyl-1-P), which is then dephosphorylated to form the acireductone 1,2-dihydroxy-3-keto-5-methylthiopentene (DHK-MTPene). The sequence is that of Enolase-phosphatase E1 from Stenotrophomonas maltophilia (strain R551-3).